The following is a 499-amino-acid chain: L-arabinose isomerase (499 aa).

Mn(2+) contacts are provided by Glu-306, Glu-333, His-350, and His-449.

The protein belongs to the arabinose isomerase family. Mn(2+) serves as cofactor.

The catalysed reaction is beta-L-arabinopyranose = L-ribulose. It functions in the pathway carbohydrate degradation; L-arabinose degradation via L-ribulose; D-xylulose 5-phosphate from L-arabinose (bacterial route): step 1/3. Catalyzes the conversion of L-arabinose to L-ribulose. This is L-arabinose isomerase from Aeromonas salmonicida (strain A449).